A 416-amino-acid polypeptide reads, in one-letter code: Glutamyl-tRNA reductase (416 aa).

Residues 49-52, serine 105, 110-112, and glutamine 116 contribute to the substrate site; these read TCNR and EPQ. Cysteine 50 functions as the Nucleophile in the catalytic mechanism. NADP(+) is bound at residue 185–190; it reads GAGETI.

It belongs to the glutamyl-tRNA reductase family. As to quaternary structure, homodimer.

It carries out the reaction (S)-4-amino-5-oxopentanoate + tRNA(Glu) + NADP(+) = L-glutamyl-tRNA(Glu) + NADPH + H(+). The protein operates within porphyrin-containing compound metabolism; protoporphyrin-IX biosynthesis; 5-aminolevulinate from L-glutamyl-tRNA(Glu): step 1/2. Its function is as follows. Catalyzes the NADPH-dependent reduction of glutamyl-tRNA(Glu) to glutamate 1-semialdehyde (GSA). This is Glutamyl-tRNA reductase from Shewanella baltica (strain OS185).